A 369-amino-acid chain; its full sequence is Caffeine synthase 1 (369 aa).

Residue Y24 coordinates S-adenosyl-L-homocysteine. Position 31 (T31) interacts with caffeine. Residues C66, N71, D103, L104, S138, and F139 each coordinate S-adenosyl-L-homocysteine. The caffeine site is built by Y156, H159, and W160. N177 contributes to the Mg(2+) binding site. R225 lines the caffeine pocket. Mg(2+)-binding residues include D263, F265, and N266. A caffeine-binding site is contributed by F321.

The protein belongs to the methyltransferase superfamily. Type-7 methyltransferase family. Mg(2+) serves as cofactor.

It carries out the reaction theobromine + S-adenosyl-L-methionine = caffeine + S-adenosyl-L-homocysteine + H(+). The catalysed reaction is 7-methylxanthine + S-adenosyl-L-methionine = theobromine + S-adenosyl-L-homocysteine + H(+). The protein operates within alkaloid biosynthesis. Involved in the biosynthesis of caffeine. Catalyzes the conversion of 7-methylxanthine (7mX) to theobromine and of theobromine to caffeine. This is Caffeine synthase 1 from Camellia crassicolumna (Evergreen tea).